Consider the following 808-residue polypeptide: Protein NLP5 (808 aa).

A compositionally biased stretch (polar residues) spans 56 to 68 (PTQDTSNSLSQMY). Positions 56 to 83 (PTQDTSNSLSQMYGQDCPERSSLEDQNQ) are disordered. Residues 536–617 (NRVTEKKRTK…IDSVEGVSGH (82 aa)) form the RWP-RK domain. A disordered region spans residues 660 to 680 (SPGSSCSHSSSCSSETQVIKE). Low complexity predominate over residues 663-673 (SSCSHSSSCSS). Positions 710-793 (FLRVKVSYEE…QTIKLLLQLS (84 aa)) constitute a PB1 domain.

It is found in the nucleus. Functionally, probable transcription factor. This Arabidopsis thaliana (Mouse-ear cress) protein is Protein NLP5 (NLP5).